The primary structure comprises 616 residues: Vitamin B12 transporter BtuB (616 aa).

An N-terminal signal peptide occupies residues Met-1 to Ala-20. Residues Asp-26–Asn-33 carry the TonB box motif. The region spanning Pro-38–Thr-152 is the TBDR plug domain. Cyanocob(III)alamin is bound by residues Leu-83, Ser-85, Asn-92, and Val-110–Thr-111. In terms of domain architecture, TBDR beta-barrel spans Lys-155 to Phe-616. The next 3 membrane-spanning stretches (beta stranded) occupy residues Thr-158–Gly-165, Tyr-169–Gln-178, and Thr-184–Thr-195. 4 residues coordinate Ca(2+): Asp-199, Gln-211, Asp-213, and Asp-215. Transmembrane regions (beta stranded) follow at residues Phe-217–Glu-227 and Asp-232–Ala-248. Ca(2+) contacts are provided by Tyr-249, Asp-250, and Asp-263. The next 17 beta stranded transmembrane spans lie at Arg-265 to Asn-279, Asp-281 to Asn-298, Thr-311 to Asp-327, His-330 to Trp-339, Tyr-355 to Gly-371, Val-373 to Asp-383, Phe-387 to Ile-402, Tyr-405 to Asn-419, Glu-436 to Glu-445, Val-451 to Asn-460, Tyr-475 to Phe-492, Pro-496 to Ala-511, Arg-519 to Thr-531, Asp-537 to Asp-552, Asn-560 to Ser-574, Ile-587 to Ala-598, and Ala-604 to Phe-616. Thr-311 is a cyanocob(III)alamin binding site. Residue Arg-519 coordinates cyanocob(III)alamin. A TonB C-terminal box motif is present at residues Tyr-599–Phe-616.

Belongs to the TonB-dependent receptor family. BtuB (TC 1.B.14.3.1) subfamily.

The protein localises to the cell outer membrane. In terms of biological role, involved in the active translocation of vitamin B12 (cyanocobalamin) across the outer membrane to the periplasmic space. It derives its energy for transport by interacting with the trans-periplasmic membrane protein TonB. The chain is Vitamin B12 transporter BtuB from Cronobacter sakazakii (strain ATCC BAA-894) (Enterobacter sakazakii).